The following is a 211-amino-acid chain: Ribonuclease P protein component 3 (211 aa).

It belongs to the eukaryotic/archaeal RNase P protein component 3 family. In terms of assembly, consists of a catalytic RNA component and at least 4-5 protein subunits.

The protein localises to the cytoplasm. The enzyme catalyses Endonucleolytic cleavage of RNA, removing 5'-extranucleotides from tRNA precursor.. In terms of biological role, part of ribonuclease P, a protein complex that generates mature tRNA molecules by cleaving their 5'-ends. The chain is Ribonuclease P protein component 3 from Aeropyrum pernix (strain ATCC 700893 / DSM 11879 / JCM 9820 / NBRC 100138 / K1).